The following is a 1107-amino-acid chain: Lon protease homolog, mitochondrial (1107 aa).

Residues 1 to 31 (MLSRQRIPRILASRTSLAHSIRSFTSTTSSI) constitute a mitochondrion transit peptide. Disordered regions lie at residues 32-152 (RPVA…PGDK) and 273-329 (PEAA…PYEP). The span at 51–60 (TNLSSFSTYT) shows a compositional bias: polar residues. The span at 80–101 (EEERKANVEHAEAEAKEAESKQ) shows a compositional bias: basic and acidic residues. Positions 122–141 (GAAGGSSAGSGSGADGGSGD) are enriched in gly residues. Positions 142 to 152 (GGKRGRKPGDK) are enriched in basic and acidic residues. The 276-residue stretch at 166-441 (VMAIPIAKRP…KALLVLKKEH (276 aa)) folds into the Lon N-terminal domain. Residue 594-601 (GPPGVGKT) participates in ATP binding. The interval 808 to 858 (PESEALTEEGKAAQEETEKKKSEEAASGETSSPKAATEASEKETTEKPRVA) is disordered. A compositionally biased stretch (basic and acidic residues) spans 815–831 (EEGKAAQEETEKKKSEE). Over residues 832–845 (AASGETSSPKAATE) the composition is skewed to low complexity. The span at 846–856 (ASEKETTEKPR) shows a compositional bias: basic and acidic residues. Positions 891 to 1077 (VTPPGVTMGL…SEVFDLIFPK (187 aa)) constitute a Lon proteolytic domain. Catalysis depends on residues Ser-983 and Lys-1026. The segment at 1085-1107 (KSRIIEDDKSEKEESKKKNDDDE) is disordered.

The protein belongs to the peptidase S16 family. Homohexamer or homoheptamer. Organized in a ring with a central cavity.

It localises to the mitochondrion matrix. The catalysed reaction is Hydrolysis of proteins in presence of ATP.. Its function is as follows. ATP-dependent serine protease that mediates the selective degradation of misfolded, unassembled or oxidatively damaged polypeptides as well as certain short-lived regulatory proteins in the mitochondrial matrix. May also have a chaperone function in the assembly of inner membrane protein complexes. Participates in the regulation of mitochondrial gene expression and in the maintenance of the integrity of the mitochondrial genome. Binds to mitochondrial DNA in a site-specific manner. The polypeptide is Lon protease homolog, mitochondrial (pim1) (Neurospora crassa (strain ATCC 24698 / 74-OR23-1A / CBS 708.71 / DSM 1257 / FGSC 987)).